A 168-amino-acid polypeptide reads, in one-letter code: uncharacterized protein (168 aa).

Low complexity predominate over residues 1–15 (MKRIISSSKSLKQLS). The segment at 1-107 (MKRIISSSKS…NNNNNNNNNN (107 aa)) is disordered. Positions 33–47 (SDSDSDSDSDSDSDS) are enriched in acidic residues. The segment covering 48 to 107 (DSNSNSNSNSNSNSNSNSNSNSNSNSNNNNNNTNNNNNNNNNNNNNNNNNNNNNNNNNNN) has biased composition (low complexity).

This is an uncharacterized protein from Dictyostelium discoideum (Social amoeba).